A 526-amino-acid polypeptide reads, in one-letter code: Putative NipSnap protein K02D10.1 (526 aa).

Belongs to the NipSnap family.

The chain is Putative NipSnap protein K02D10.1 from Caenorhabditis elegans.